Here is a 120-residue protein sequence, read N- to C-terminus: Large ribosomal subunit protein bL19 (120 aa).

This sequence belongs to the bacterial ribosomal protein bL19 family.

Functionally, this protein is located at the 30S-50S ribosomal subunit interface and may play a role in the structure and function of the aminoacyl-tRNA binding site. This is Large ribosomal subunit protein bL19 from Marinomonas sp. (strain MWYL1).